A 243-amino-acid polypeptide reads, in one-letter code: Myrosinase MB2 (243 aa).

A glycan (N-linked (GlcNAc...) asparagine) is linked at N30. A substrate-binding site is contributed by Y51. E125 functions as the Nucleophile in the catalytic mechanism. Substrate-binding positions include W173 and 180–181 (EF). Residue N216 is glycosylated (N-linked (GlcNAc...) asparagine).

It belongs to the glycosyl hydrolase 1 family. In terms of assembly, homodimer. In vacuoles called myrosin grains of a certain class of cells, myrosin cells, distributed in the cotyledons and the axis of the embryo as well as in different organs of the growing plant.

Its subcellular location is the vacuole. It catalyses the reaction a thioglucoside + H2O = a sugar + a thiol.. Functionally, degradation of glucosinolates (glucose residue linked by a thioglucoside bound to an amino acid derivative) to glucose, sulfate and any of the products: thiocyanates, isothiocyanates, nitriles, epithionitriles or oxazolidine-2-thiones. This Sinapis alba (White mustard) protein is Myrosinase MB2.